The chain runs to 349 residues: Homeobox-leucine zipper protein HOX7 (349 aa).

Residues 42-186 (RATRRDEQDD…PKQKSDLANR (145 aa)) form a disordered region. 2 stretches are compositionally biased toward polar residues: residues 89 to 99 (SAETGSANSEM) and 121 to 135 (SSPS…RQQV). Residues 150–209 (GARKKLRLSKEQSSFLEDSFKEHSTLTPKQKSDLANRLNLRPRQVEVWFQNRRARTKLKQ) constitute a DNA-binding region (homeobox). A compositionally biased stretch (basic and acidic residues) spans 167 to 183 (DSFKEHSTLTPKQKSDL). Residues 208–252 (KQTEVDCEHLKRCCERLTRENRRLQREVAELRGTLRTTTSSYPPL) form a leucine-zipper region.

The protein belongs to the HD-ZIP homeobox family. Class II subfamily. Homodimer. May form a heterodimer with HOX1, HOX2 or HOX3. Expressed in seedlings, roots, leaves, nodes, internodes, flowers and embryo.

Its subcellular location is the nucleus. Probable transcription factor that binds to the DNA sequence 5'-CAAT[GC]ATTG-3'. This Oryza sativa subsp. japonica (Rice) protein is Homeobox-leucine zipper protein HOX7 (HOX7).